A 499-amino-acid chain; its full sequence is Probable alpha-L-arabinofuranosidase B (499 aa).

Positions 1–17 (MFSRRNLLALGLAATVS) are cleaved as a signal peptide. A catalytic region spans residues 18-335 (AGPCDIYEAG…ENIVAAKYVV (318 aa)). 3 disulfide bridges follow: Cys21–Cys31, Cys81–Cys86, and Cys176–Cys177. An N-linked (GlcNAc...) asparagine glycan is attached at Asn83. The N-linked (GlcNAc...) asparagine glycan is linked to Asn202. Asp219 provides a ligand contact to substrate. The Nucleophile role is filled by Glu221. Substrate contacts are provided by Asn222, Asn223, Gly296, His416, Asn418, Phe419, Asp435, His463, Glu465, Leu468, and Asp488. Residues 336-499 (GSLVSGPSFT…SFEIETAFAS (164 aa)) are ABD. Cysteines 401 and 439 form a disulfide.

This sequence belongs to the glycosyl hydrolase 54 family.

It localises to the secreted. The enzyme catalyses Hydrolysis of terminal non-reducing alpha-L-arabinofuranoside residues in alpha-L-arabinosides.. It participates in glycan metabolism; L-arabinan degradation. In terms of biological role, alpha-L-arabinofuranosidase involved in the degradation of arabinoxylan, a major component of plant hemicellulose. Able to hydrolyze 1,5-, 1,3- and 1,2-alpha-linkages not only in L-arabinofuranosyl oligosaccharides, but also in polysaccharides containing terminal non-reducing L-arabinofuranoses in side chains, like L-arabinan, arabinogalactan and arabinoxylan. The chain is Probable alpha-L-arabinofuranosidase B (abfB) from Aspergillus awamori (Black koji mold).